The chain runs to 208 residues: Adenylyl-sulfate kinase (208 aa).

31–38 is an ATP binding site; the sequence is GLSGSGKS. Serine 105 serves as the catalytic Phosphoserine intermediate.

It belongs to the APS kinase family.

It carries out the reaction adenosine 5'-phosphosulfate + ATP = 3'-phosphoadenylyl sulfate + ADP + H(+). It participates in sulfur metabolism; hydrogen sulfide biosynthesis; sulfite from sulfate: step 2/3. Functionally, catalyzes the synthesis of activated sulfate. This Pseudomonas entomophila (strain L48) protein is Adenylyl-sulfate kinase.